The primary structure comprises 1003 residues: NACHT, LRR and PYD domains-containing protein 9B (1003 aa).

One can recognise a Pyrin domain in the interval 1–91; that stretch reads MAGSSGYGLL…SIMAQKKKRH (91 aa). The NACHT domain maps to 143-465; that stretch reads VTAIVAGTTG…QDKDICVPVI (323 aa). Residue 149-156 participates in ATP binding; the sequence is GTTGEGKT. LRR repeat units follow at residues 749–770, 778–799, 806–826, 835–856, 863–883, 892–913, and 920–940; these read KVKH…SLCE, VLQS…HLYE, HLSL…NLLC, TLKE…EISA, NLKT…RQLC, NLEC…DLAL, and TLNS…VVLC.

In terms of assembly, sensor component of NLRP9 inflammasomes. Inflammasomes are supramolecular complexes that assemble in the cytosol in response to pathogens, such as rotavirus, but not encephalomyocarditis virus (EMCV), and play critical roles in innate immunity and inflammation. The core of NLRP9 inflammasomes consists of a signal sensor component (NLRP9), an adapter (ASC/PYCARD), which recruits an effector pro-inflammatory caspase (CASP1). Within the complex, NLRP9 and PYCARD interact via their respective DAPIN/pyrin domains. This interaction initiates speck formation (nucleation) which greatly enhances further addition of soluble PYCARD molecules to the speck in a prion-like polymerization process. Clustered PYCARD nucleates the formation of CASP1 filaments through the interaction of their respective CARD domains, acting as a platform for CASP1 polymerization. CASP1 filament formation increases local enzyme concentration, resulting in trans-autocleavage and activation. Active CASP1 then processes IL1B and IL18 precursors, leading to the release of mature cytokines in the extracellular milieu and inflammatory response. Interacts with DHX9 upon rotavirus infection; this interaction may trigger inflammasome activation and inflammatory response. Predominantly expressed in the intestine, including proximal and distal colon, cecum, ileum, jejunum and duodenum (at protein level). In the ileum, expressed in epithelial cells. Also expressed in oocytes at all follicular stages and in preimplantation embryos (at protein level). Although expression decreases in preimplantation embryos, it is still detectable in blastocyts.

It is found in the cytoplasm. Its subcellular location is the inflammasome. As the sensor component of the NLRP9 inflammasome, plays a crucial role in innate immunity and inflammation. In response to pathogens, including rotavirus, initiates the formation of the inflammasome polymeric complex, made of NLRP9, PYCARD and CASP1. Recruitment of proCASP1 to the inflammasome promotes its activation and CASP1-catalyzed IL1B and IL18 maturation and release in the extracellular milieu. The active cytokines stimulate inflammatory responses. Inflammasomes can also induce pyroptosis, an inflammatory form of programmed cell death. NLRP9 inflammasome activation may be initiated by DHX9 interaction with viral double-stranded RNA (dsRNA), preferentially to short dsRNA segments. This is NACHT, LRR and PYD domains-containing protein 9B (Nlrp9b) from Mus musculus (Mouse).